We begin with the raw amino-acid sequence, 239 residues long: Ribonuclease HII (239 aa).

Residues 18–231 (KIIVGLDEAG…SKNLLKEIEE (214 aa)) enclose the RNase H type-2 domain. A divalent metal cation contacts are provided by D24, E25, and D125.

The protein belongs to the RNase HII family. Mn(2+) serves as cofactor. Requires Mg(2+) as cofactor.

The protein resides in the cytoplasm. It carries out the reaction Endonucleolytic cleavage to 5'-phosphomonoester.. In terms of biological role, endonuclease that specifically degrades the RNA of RNA-DNA hybrids. The protein is Ribonuclease HII of Methanococcus maripaludis (strain C7 / ATCC BAA-1331).